The chain runs to 95 residues: Co-chaperonin GroES (95 aa).

Belongs to the GroES chaperonin family. Heptamer of 7 subunits arranged in a ring. Interacts with the chaperonin GroEL.

The protein resides in the cytoplasm. Together with the chaperonin GroEL, plays an essential role in assisting protein folding. The GroEL-GroES system forms a nano-cage that allows encapsulation of the non-native substrate proteins and provides a physical environment optimized to promote and accelerate protein folding. GroES binds to the apical surface of the GroEL ring, thereby capping the opening of the GroEL channel. This is Co-chaperonin GroES from Rickettsia conorii (strain ATCC VR-613 / Malish 7).